The chain runs to 355 residues: Peptide chain release factor 1 (355 aa).

Residue Gln231 is modified to N5-methylglutamine.

It belongs to the prokaryotic/mitochondrial release factor family. Post-translationally, methylated by PrmC. Methylation increases the termination efficiency of RF1.

It localises to the cytoplasm. Peptide chain release factor 1 directs the termination of translation in response to the peptide chain termination codons UAG and UAA. In Sulfurovum sp. (strain NBC37-1), this protein is Peptide chain release factor 1.